Reading from the N-terminus, the 600-residue chain is Elongation factor 4 (600 aa).

The tr-type G domain maps to 5–187; that stretch reads KYIRNFSIIA…AIVNKLPPPK (183 aa). Residues 17 to 22 and 134 to 137 each bind GTP; these read DHGKST and NKLD.

Belongs to the TRAFAC class translation factor GTPase superfamily. Classic translation factor GTPase family. LepA subfamily.

It localises to the cell inner membrane. The enzyme catalyses GTP + H2O = GDP + phosphate + H(+). Its function is as follows. Required for accurate and efficient protein synthesis under certain stress conditions. May act as a fidelity factor of the translation reaction, by catalyzing a one-codon backward translocation of tRNAs on improperly translocated ribosomes. Back-translocation proceeds from a post-translocation (POST) complex to a pre-translocation (PRE) complex, thus giving elongation factor G a second chance to translocate the tRNAs correctly. Binds to ribosomes in a GTP-dependent manner. The chain is Elongation factor 4 from Rickettsia conorii (strain ATCC VR-613 / Malish 7).